The following is a 549-amino-acid chain: Glucose-6-phosphate isomerase (549 aa).

Residue Glu355 is the Proton donor of the active site. Active-site residues include His386 and Lys514.

The protein belongs to the GPI family.

It is found in the cytoplasm. It carries out the reaction alpha-D-glucose 6-phosphate = beta-D-fructose 6-phosphate. It participates in carbohydrate biosynthesis; gluconeogenesis. Its pathway is carbohydrate degradation; glycolysis; D-glyceraldehyde 3-phosphate and glycerone phosphate from D-glucose: step 2/4. Catalyzes the reversible isomerization of glucose-6-phosphate to fructose-6-phosphate. This is Glucose-6-phosphate isomerase from Desulfatibacillum aliphaticivorans.